A 152-amino-acid chain; its full sequence is Protein SprT-like (152 aa).

The SprT-like domain maps to 7-147 (QRLVEEVSLQ…CGKCKGKLKP (141 aa)). Zn(2+) is bound at residue His-67. The active site involves Glu-68. His-71 is a Zn(2+) binding site.

Belongs to the SprT family. The cofactor is Zn(2+).

The protein resides in the cytoplasm. The chain is Protein SprT-like from Bacillus cereus (strain ATCC 14579 / DSM 31 / CCUG 7414 / JCM 2152 / NBRC 15305 / NCIMB 9373 / NCTC 2599 / NRRL B-3711).